Here is a 160-residue protein sequence, read N- to C-terminus: CXXC motif containing zinc binding protein (160 aa).

Zn(2+) contacts are provided by C33, C36, C67, and C70. The residue at position 75 (S75) is a Phosphoserine.

This sequence belongs to the UPF0587 family. In terms of assembly, monomer.

In Mus musculus (Mouse), this protein is CXXC motif containing zinc binding protein (Czib).